The sequence spans 507 residues: Maturase K (507 aa).

It belongs to the intron maturase 2 family. MatK subfamily.

The protein localises to the plastid. The protein resides in the chloroplast. In terms of biological role, usually encoded in the trnK tRNA gene intron. Probably assists in splicing its own and other chloroplast group II introns. This is Maturase K from Cryptomeria japonica (Japanese cedar).